Here is a 357-residue protein sequence, read N- to C-terminus: MPFLGQDWRSPGWSWIKTEDGWKRCDPCSHELRSEDSQYTINHSIILNSGEEEIFNNECEYAAKKRKKEHFGNDTAAHSFYREKWIYVHKESTKERHGYCTLGEAFNRLDFSSAIQDIRRFTYVVKLLQLIAKSQLTSLSGVAQKNYFNILDKIVQKVLDDHQNPRLIKGLLQDLSSTLGILVRGVGKSVLVGNINIWICRLETVLSWQQQLQNLQVTKQVNTGLTLSDLPLHMLNNILYRFSDGWDIVTLGQVTPTLYMLSEDRRLWKRLCQYHFAEQQFCRHLILSEKGHIEWKLMYFTLQKYYPTKEQYGDTLHFCRHCSILFWKDSGHPCTAADPDSCFTPVSPEHFIDLFKF.

An interaction with beta-actin region spans residues 1–83; that stretch reads MPFLGQDWRS…DTAAHSFYRE (83 aa). An F-box domain is found at 225 to 273; it reads LTLSDLPLHMLNNILYRFSDGWDIVTLGQVTPTLYMLSEDRRLWKRLCQ.

Part of a SCF (SKP1-cullin-F-box) protein ligase complex consisting of FBXO25, SKP1, CUL1 and RBX1. Interacts directly with SKP1 and CUL1. Interacts (via C-terminus) with beta-actin (via N-terminus). As to expression, expressed in all tissues tested, except striated muscle (at protein level). Expressed predominantly in the cerebral cortex, the hippocampus and the Purkinje cell layer of the brain. Intestine and kidney show also significant levels.

The protein localises to the nucleus. It functions in the pathway protein modification; protein ubiquitination. Substrate-recognition component of the SCF (SKP1-CUL1-F-box protein)-type E3 ubiquitin ligase complex. May play a role in accumulation of expanded polyglutamine (polyQ) protein huntingtin (HTT). The sequence is that of F-box only protein 25 (Fbxo25) from Mus musculus (Mouse).